Reading from the N-terminus, the 488-residue chain is Regulatory protein ViaA (488 aa).

This sequence belongs to the ViaA family. Homodimer. Interacts with RavA.

It localises to the cytoplasm. Functionally, component of the RavA-ViaA chaperone complex, which may act on the membrane to optimize the function of some of the respiratory chains. ViaA stimulates the ATPase activity of RavA. The protein is Regulatory protein ViaA of Yersinia enterocolitica serotype O:8 / biotype 1B (strain NCTC 13174 / 8081).